Reading from the N-terminus, the 101-residue chain is NADH-quinone oxidoreductase subunit K (101 aa).

The next 3 helical transmembrane spans lie at 4-24, 29-49, and 61-81; these read LSDYLILSSVIFCIGLVGIFV, IITLLMCVELILVAVNTNFVA, and IFVFFILTVAAAEVAIGLAIL.

It belongs to the complex I subunit 4L family. In terms of assembly, NDH-1 is composed of 14 different subunits. Subunits NuoA, H, J, K, L, M, N constitute the membrane sector of the complex.

The protein resides in the cell inner membrane. The catalysed reaction is a quinone + NADH + 5 H(+)(in) = a quinol + NAD(+) + 4 H(+)(out). Its function is as follows. NDH-1 shuttles electrons from NADH, via FMN and iron-sulfur (Fe-S) centers, to quinones in the respiratory chain. The immediate electron acceptor for the enzyme in this species is believed to be ubiquinone. Couples the redox reaction to proton translocation (for every two electrons transferred, four hydrogen ions are translocated across the cytoplasmic membrane), and thus conserves the redox energy in a proton gradient. The sequence is that of NADH-quinone oxidoreductase subunit K from Ruthia magnifica subsp. Calyptogena magnifica.